The primary structure comprises 256 residues: Phosphatidylglycerol--prolipoprotein diacylglyceryl transferase (256 aa).

3 consecutive transmembrane segments (helical) span residues 19 to 39 (VHWYGLMYLIGFIGAWLLGYW), 56 to 76 (LIFYSALGVILGGRVGYMLFY), and 91 to 111 (IWEGGMSFHGGLLGVVIAAWL). Residue Arg139 participates in a 1,2-diacyl-sn-glycero-3-phospho-(1'-sn-glycerol) binding. A helical membrane pass occupies residues 231–251 (FGWLTMGQVLSIPMLLIGIWL).

The protein belongs to the Lgt family.

It is found in the cell inner membrane. It catalyses the reaction L-cysteinyl-[prolipoprotein] + a 1,2-diacyl-sn-glycero-3-phospho-(1'-sn-glycerol) = an S-1,2-diacyl-sn-glyceryl-L-cysteinyl-[prolipoprotein] + sn-glycerol 1-phosphate + H(+). It participates in protein modification; lipoprotein biosynthesis (diacylglyceryl transfer). Functionally, catalyzes the transfer of the diacylglyceryl group from phosphatidylglycerol to the sulfhydryl group of the N-terminal cysteine of a prolipoprotein, the first step in the formation of mature lipoproteins. In Legionella pneumophila (strain Corby), this protein is Phosphatidylglycerol--prolipoprotein diacylglyceryl transferase.